We begin with the raw amino-acid sequence, 292 residues long: NAD kinase (292 aa).

The Proton acceptor role is filled by aspartate 72. Residues 72 to 73 (DG), 146 to 147 (NE), histidine 157, arginine 174, aspartate 176, and 187 to 192 (TAYALS) each bind NAD(+).

It belongs to the NAD kinase family. A divalent metal cation serves as cofactor.

Its subcellular location is the cytoplasm. The catalysed reaction is NAD(+) + ATP = ADP + NADP(+) + H(+). Functionally, involved in the regulation of the intracellular balance of NAD and NADP, and is a key enzyme in the biosynthesis of NADP. Catalyzes specifically the phosphorylation on 2'-hydroxyl of the adenosine moiety of NAD to yield NADP. The polypeptide is NAD kinase (Shewanella oneidensis (strain ATCC 700550 / JCM 31522 / CIP 106686 / LMG 19005 / NCIMB 14063 / MR-1)).